Reading from the N-terminus, the 588-residue chain is Phosphomethylpyrimidine synthase (588 aa).

Substrate-binding positions include Asn-212, Met-241, Tyr-270, His-306, 326–328 (SRG), 367–370 (DGLR), and Glu-406. A Zn(2+)-binding site is contributed by His-410. Tyr-433 contributes to the substrate binding site. His-474 contacts Zn(2+). Cys-554, Cys-557, and Cys-562 together coordinate [4Fe-4S] cluster.

It belongs to the ThiC family. In terms of assembly, homodimer. [4Fe-4S] cluster serves as cofactor.

It catalyses the reaction 5-amino-1-(5-phospho-beta-D-ribosyl)imidazole + S-adenosyl-L-methionine = 4-amino-2-methyl-5-(phosphooxymethyl)pyrimidine + CO + 5'-deoxyadenosine + formate + L-methionine + 3 H(+). Its pathway is cofactor biosynthesis; thiamine diphosphate biosynthesis. In terms of biological role, catalyzes the synthesis of the hydroxymethylpyrimidine phosphate (HMP-P) moiety of thiamine from aminoimidazole ribotide (AIR) in a radical S-adenosyl-L-methionine (SAM)-dependent reaction. The polypeptide is Phosphomethylpyrimidine synthase (Bartonella quintana (strain Toulouse) (Rochalimaea quintana)).